A 395-amino-acid chain; its full sequence is Indoleacetate--lysine synthetase (395 aa).

The protein belongs to the ATP-dependent AMP-binding enzyme family.

It catalyses the reaction (indol-3-yl)acetate + L-lysine + ATP = N(6)-[(indole-3-yl)acetyl]-L-lysine + ADP + phosphate + H(+). Conversion of IAA to IAA-lysine. The protein is Indoleacetate--lysine synthetase (iaaL) of Pseudomonas savastanoi (Pseudomonas syringae pv. savastanoi).